The following is a 414-amino-acid chain: Esterase FrsA (414 aa).

The protein belongs to the FrsA family.

It catalyses the reaction a carboxylic ester + H2O = an alcohol + a carboxylate + H(+). In terms of biological role, catalyzes the hydrolysis of esters. The chain is Esterase FrsA from Escherichia coli O17:K52:H18 (strain UMN026 / ExPEC).